Consider the following 175-residue polypeptide: Ribosome maturation factor RimM (175 aa).

Residues Glu96–Phe175 form the PRC barrel domain.

This sequence belongs to the RimM family. In terms of assembly, binds ribosomal protein uS19.

The protein localises to the cytoplasm. In terms of biological role, an accessory protein needed during the final step in the assembly of 30S ribosomal subunit, possibly for assembly of the head region. Essential for efficient processing of 16S rRNA. May be needed both before and after RbfA during the maturation of 16S rRNA. It has affinity for free ribosomal 30S subunits but not for 70S ribosomes. This Histophilus somni (strain 129Pt) (Haemophilus somnus) protein is Ribosome maturation factor RimM.